The primary structure comprises 273 residues: Large ribosomal subunit protein uL2cz/uL2cy (273 aa).

Disordered regions lie at residues 1-20 and 224-254; these read MAIHLYKTSTPSTRKGAVDS and NPVDHPHGGGEGRAPIGRKKPTTPWGYPALG.

The protein belongs to the universal ribosomal protein uL2 family. As to quaternary structure, part of the 50S ribosomal subunit.

Its subcellular location is the plastid. The protein localises to the chloroplast. This is Large ribosomal subunit protein uL2cz/uL2cy (rpl2-A) from Nuphar advena (Common spatterdock).